The following is a 134-amino-acid chain: Methylglyoxal synthase (134 aa).

One can recognise an MGS-like domain in the interval 1–134 (MKIALIAHDR…DWRLIQERRN (134 aa)). Substrate is bound by residues His8, Lys12, 34–37 (TGTT), and 54–55 (SG). Residue Asp60 is the Proton donor/acceptor of the active site. Residue His87 participates in substrate binding.

It belongs to the methylglyoxal synthase family.

It carries out the reaction dihydroxyacetone phosphate = methylglyoxal + phosphate. Catalyzes the formation of methylglyoxal from dihydroxyacetone phosphate. In Lysinibacillus sphaericus (strain C3-41), this protein is Methylglyoxal synthase.